A 373-amino-acid polypeptide reads, in one-letter code: Chaperone protein DnaJ (373 aa).

Residues 5–70 (DFYATLGVAR…EKRAMYDQYG (66 aa)) form the J domain. Residues 134-212 (GVKKRINIPT…CRGAGRNKAV (79 aa)) form a CR-type zinc finger. Positions 147, 150, 164, 167, 186, 189, 200, and 203 each coordinate Zn(2+). CXXCXGXG motif repeat units follow at residues 147–154 (CDVCNGSG), 164–171 (CPTCKGSG), 186–193 (CPTCHGAG), and 200–207 (CVKCRGAG).

Belongs to the DnaJ family. In terms of assembly, homodimer. It depends on Zn(2+) as a cofactor.

The protein resides in the cytoplasm. Participates actively in the response to hyperosmotic and heat shock by preventing the aggregation of stress-denatured proteins and by disaggregating proteins, also in an autonomous, DnaK-independent fashion. Unfolded proteins bind initially to DnaJ; upon interaction with the DnaJ-bound protein, DnaK hydrolyzes its bound ATP, resulting in the formation of a stable complex. GrpE releases ADP from DnaK; ATP binding to DnaK triggers the release of the substrate protein, thus completing the reaction cycle. Several rounds of ATP-dependent interactions between DnaJ, DnaK and GrpE are required for fully efficient folding. Also involved, together with DnaK and GrpE, in the DNA replication of plasmids through activation of initiation proteins. In Neisseria meningitidis serogroup C (strain 053442), this protein is Chaperone protein DnaJ.